We begin with the raw amino-acid sequence, 636 residues long: Threonine--tRNA ligase (636 aa).

In terms of domain architecture, TGS spans 1 to 63; it reads MPMITITLPD…EHDASLRIIT (63 aa). The segment at 245–536 is catalytic; that stretch reads DHRKIGKAQD…LIEHHAGAFP (292 aa). Cysteine 336, histidine 387, and histidine 513 together coordinate Zn(2+).

The protein belongs to the class-II aminoacyl-tRNA synthetase family. As to quaternary structure, homodimer. The cofactor is Zn(2+).

Its subcellular location is the cytoplasm. It catalyses the reaction tRNA(Thr) + L-threonine + ATP = L-threonyl-tRNA(Thr) + AMP + diphosphate + H(+). Its function is as follows. Catalyzes the attachment of threonine to tRNA(Thr) in a two-step reaction: L-threonine is first activated by ATP to form Thr-AMP and then transferred to the acceptor end of tRNA(Thr). Also edits incorrectly charged L-seryl-tRNA(Thr). The sequence is that of Threonine--tRNA ligase from Xanthomonas campestris pv. campestris (strain 8004).